Consider the following 90-residue polypeptide: MANSKSAKKRILVAERNRVRNQAVKTRVKTMAKKVLSTIEVKDVEAAKVALSVAYKEFDKAVSKGILKKNTASRKKARLAAKVNSLVSSL.

This sequence belongs to the bacterial ribosomal protein bS20 family.

In terms of biological role, binds directly to 16S ribosomal RNA. The polypeptide is Small ribosomal subunit protein bS20 (Fusobacterium nucleatum subsp. nucleatum (strain ATCC 25586 / DSM 15643 / BCRC 10681 / CIP 101130 / JCM 8532 / KCTC 2640 / LMG 13131 / VPI 4355)).